The following is a 1403-amino-acid chain: DNA-directed RNA polymerase subunit beta' (1403 aa).

Zn(2+)-binding residues include Cys-68, Cys-70, Cys-83, and Cys-86. Mg(2+)-binding residues include Asp-459, Asp-461, and Asp-463. The Zn(2+) site is built by Cys-814, Cys-887, Cys-894, and Cys-897.

It belongs to the RNA polymerase beta' chain family. The RNAP catalytic core consists of 2 alpha, 1 beta, 1 beta' and 1 omega subunit. When a sigma factor is associated with the core the holoenzyme is formed, which can initiate transcription. Mg(2+) serves as cofactor. Requires Zn(2+) as cofactor.

It carries out the reaction RNA(n) + a ribonucleoside 5'-triphosphate = RNA(n+1) + diphosphate. Its function is as follows. DNA-dependent RNA polymerase catalyzes the transcription of DNA into RNA using the four ribonucleoside triphosphates as substrates. The protein is DNA-directed RNA polymerase subunit beta' of Solibacter usitatus (strain Ellin6076).